A 244-amino-acid chain; its full sequence is Securin-like protein (244 aa).

The tract at residues 31-53 (ELEKTPSRGGLGLVVNSSKTPGG) is disordered.

As to quaternary structure, forms a complex (via C-terminus) with separase sep-1. Interaction with ify-1 stabilizes sep-1. Also maintains the complex in the cytoplasm during interphase and recruits it to chromosomes during the first meiotic division. Interacts with E3 ubiquitin-protein ligase etc-1. Ubiquitinated by etc-1 likely at the onset of anaphase, resulting in its degradation. As to expression, expressed in germ cells including oocytes.

The protein resides in the cytoplasm. Its subcellular location is the chromosome. It localises to the cytoskeleton. The protein localises to the spindle. Functionally, acts as a chaperone and as an inhibitor for separase sep-1. Plays an essential role in maintaining chromosome cohesion prior to meiotic and mitotic anaphase, in cytokinesis and in organizing the spindle and the centrosome. Ubiquitination-dependent degradation at the onset of anaphase is likely to activate sep-1 resulting in the proteolysis of the cohesin complex and the subsequent segregation of the chromosomes. Also required for cortical granule exocytosis. This Caenorhabditis elegans protein is Securin-like protein.